Consider the following 282-residue polypeptide: Acetyl-coenzyme A carboxylase carboxyl transferase subunit beta 1 (282 aa).

Residues 23–282 enclose the CoA carboxyltransferase N-terminal domain; the sequence is LMTKCPECRH…MHTKGGVQHV (260 aa). 4 residues coordinate Zn(2+): cysteine 27, cysteine 30, cysteine 46, and cysteine 49. The C4-type zinc finger occupies 27 to 49; sequence CPECRHILLTKELEKNHKVCTKC.

The protein belongs to the AccD/PCCB family. In terms of assembly, acetyl-CoA carboxylase is a heterohexamer composed of biotin carboxyl carrier protein (AccB), biotin carboxylase (AccC) and two subunits each of ACCase subunit alpha (AccA) and ACCase subunit beta (AccD). Zn(2+) is required as a cofactor.

The protein localises to the cytoplasm. The enzyme catalyses N(6)-carboxybiotinyl-L-lysyl-[protein] + acetyl-CoA = N(6)-biotinyl-L-lysyl-[protein] + malonyl-CoA. It participates in lipid metabolism; malonyl-CoA biosynthesis; malonyl-CoA from acetyl-CoA: step 1/1. Functionally, component of the acetyl coenzyme A carboxylase (ACC) complex. Biotin carboxylase (BC) catalyzes the carboxylation of biotin on its carrier protein (BCCP) and then the CO(2) group is transferred by the transcarboxylase to acetyl-CoA to form malonyl-CoA. This Lysinibacillus sphaericus (strain C3-41) protein is Acetyl-coenzyme A carboxylase carboxyl transferase subunit beta 1.